Reading from the N-terminus, the 469-residue chain is Arginine biosynthesis bifunctional protein ArgJ, mitochondrial (469 aa).

6 residues coordinate substrate: Thr-199, Lys-228, Thr-239, Glu-325, Asn-464, and Thr-469. The Nucleophile role is filled by Thr-239.

Belongs to the ArgJ family. Heterodimer of an alpha and a beta chain. In terms of processing, the alpha and beta chains are autoproteolytically processed from a single precursor protein within the mitochondrion.

It is found in the mitochondrion matrix. It carries out the reaction N(2)-acetyl-L-ornithine + L-glutamate = N-acetyl-L-glutamate + L-ornithine. The enzyme catalyses L-glutamate + acetyl-CoA = N-acetyl-L-glutamate + CoA + H(+). Its pathway is amino-acid biosynthesis; L-arginine biosynthesis; L-ornithine and N-acetyl-L-glutamate from L-glutamate and N(2)-acetyl-L-ornithine (cyclic): step 1/1. It participates in amino-acid biosynthesis; L-arginine biosynthesis; N(2)-acetyl-L-ornithine from L-glutamate: step 1/4. In terms of biological role, catalyzes two activities which are involved in the cyclic version of arginine biosynthesis: the synthesis of acetylglutamate from glutamate and acetyl-CoA, and of ornithine by transacetylation between acetylornithine and glutamate. The chain is Arginine biosynthesis bifunctional protein ArgJ, mitochondrial from Neurospora crassa (strain ATCC 24698 / 74-OR23-1A / CBS 708.71 / DSM 1257 / FGSC 987).